Here is a 290-residue protein sequence, read N- to C-terminus: Phosphonopyruvate hydrolase (290 aa).

40 to 44 (WGSGF) contributes to the substrate binding site. The Nucleophile role is filled by Asp54. Asp81 is a binding site for Mg(2+). Residues Arg155, His186, and Arg188 each contribute to the substrate site.

In terms of assembly, homodimer. Homotetramer. It depends on Co(2+) as a cofactor. Mg(2+) serves as cofactor. The cofactor is Mn(2+).

The enzyme catalyses 3-phosphonopyruvate + H2O = pyruvate + phosphate + H(+). Partially inhibited by EDTA. Activity is restored by Co(2+), and to a lesser extent by Ni(2+) and Mg(2+). Unaffected by Cs(2+) and Ca(2+). Activity is reduced by Mn(2+) and Cu(2+). In terms of biological role, hydrolyzes phosphonopyruvate. Not active towards phosphoenolpyruvate, glycerophosphate, phospho-L-serine or phosphoglycolic acid. In Variovorax sp. (strain Pal2), this protein is Phosphonopyruvate hydrolase.